A 502-amino-acid polypeptide reads, in one-letter code: MTVLWFVSLILLISILLVAVKHSKRRWVRQPPSPPGLPIIGNLHQLGELPHQSLCKLSKKYGPVMLLKLGRVPTVIVSTPETAKQVLKDYDLHCCSRPSLEGTRKLSYNYLDIAFSRFDDYWKELRKLCVEELFCNKRINSIQPIKEAEMEKLIDSIAESASQKTLVNLSDTFLSLNVNVICKAVFGVNFQGTVLNNDKFQDLVHEALEMLGSFSASDFFPYVGWIVDWFTGLHARRERSVRDLDAFYEQMIDLHLQKNREESEDDFVDLLLRLEKEEAVLGYGKLTRNHIKAILMNILLGGINTSAITMTWAMAELIRNPRVMKKVQSEIRAQIGKNNKTRIISLDEINHLSYLNMVIKETCRLHPVAPLLVPREVISEFKINGYTIQPKTRLHVNVWAIGRDPEIWKDPEEFLPERFMDCDIDVKGQDYELLPFGSGRRICPAVYMGITTVEFGLANLLYHFDWKLPEGVAVEDIYMDEASGLTSHKKHDLLLVPVKSLV.

Residues 1–21 traverse the membrane as a helical segment; it reads MTVLWFVSLILLISILLVAVK. Cysteine 443 contacts heme.

The protein belongs to the cytochrome P450 family. It depends on heme as a cofactor.

Its subcellular location is the membrane. This Arabidopsis thaliana (Mouse-ear cress) protein is Cytochrome P450 71B10 (CYP71B10).